An 87-amino-acid polypeptide reads, in one-letter code: Toxin CsEv3 (87 aa).

The N-terminal stretch at 1 to 19 is a signal peptide; it reads MNSLLMITACLFLIGTVWA. Residues 20-85 form the LCN-type CS-alpha/beta domain; that stretch reads KEGYLVNKST…TYPLPNKSCG (66 aa). Disulfide bonds link Cys-31–Cys-84, Cys-35–Cys-60, Cys-44–Cys-65, and Cys-48–Cys-67. Residue Cys-84 is modified to Cysteine amide.

Belongs to the long (4 C-C) scorpion toxin superfamily. Sodium channel inhibitor family. Beta subfamily. Expressed by the venom gland.

The protein resides in the secreted. In terms of biological role, beta toxins bind voltage-independently at site-4 of sodium channels (Nav) and shift the voltage of activation toward more negative potentials thereby affecting sodium channel activation and promoting spontaneous and repetitive firing. Induces immediate paralysis in crickets after injection, with a total paralysis occurring within 15-30 minutes and lasting for 1-2 hours. Is also lethal to vertebrate (chicks) when injected in very high dosages (more that 100 mg/kg). The sequence is that of Toxin CsEv3 from Centruroides sculpturatus (Arizona bark scorpion).